The chain runs to 508 residues: UTP--glucose-1-phosphate uridylyltransferase (508 aa).

Ser13 is modified (phosphoserine). UTP-binding positions include 113–116 (LNGG), Lys127, Gln190, and Gly222. 115–116 (GG) contributes to the substrate binding site. Lys127 lines the Mg(2+) pocket. Substrate contacts are provided by residues His223 and 251-253 (NID). UTP-binding residues include Asp253 and Lys396. Asp253 is a Mg(2+) binding site. Lys396 is a catalytic residue. Thr426 bears the Phosphothreonine mark. Ser434 bears the Phosphoserine mark. Residue Lys438 is modified to N6-acetyllysine. 2 positions are modified to phosphoserine: Ser448 and Ser461. The interval 457-508 (HLTVSGDVTFGKNVSLKGTVIIIXNHGDRIDIPPGAVLENKIVSGNLRILDH) is oligomerization. A critical for end-to-end subunit interaction region spans residues 502-503 (NL).

It belongs to the UDPGP type 1 family. Homooctamer.

The protein resides in the cytoplasm. It carries out the reaction alpha-D-glucose 1-phosphate + UTP + H(+) = UDP-alpha-D-glucose + diphosphate. Its pathway is glycan biosynthesis; glycogen biosynthesis. In terms of biological role, UTP--glucose-1-phosphate uridylyltransferase catalyzing the conversion of glucose-1-phosphate into UDP-glucose, a crucial precursor for the production of glycogen. The polypeptide is UTP--glucose-1-phosphate uridylyltransferase (UGP2) (Sus scrofa (Pig)).